A 497-amino-acid chain; its full sequence is Acetyltransferase FGR3 (497 aa).

Residues Asp221 and Ile224 each contribute to the Ca(2+) site. The CoA site is built by Lys255 and Asp303. Asp386 serves as a coordination point for Ca(2+). Residue Thr396 participates in CoA binding. Residue Asp462 participates in Ca(2+) binding. A disordered region spans residues 477-497; sequence DASEAKKANGTNGTNGVNGSS. Residues 485-497 show a composition bias toward low complexity; sequence NGTNGTNGVNGSS.

It belongs to the trichothecene 3-O-acetyltransferase family.

It participates in secondary metabolite biosynthesis. Functionally, acetyltransferase; part of the gene cluster that mediates the biosynthesis of the tetraketides fugralins such as linear fugralin A and cyclic fugralin B, volatile compounds that play a role in the asexual reproductive cycle but are not involved in pathogenicity. One of the key features of fugralins is the presence of a double methyl group, which is only rarely encountered in fungal secondary metabolites. As the fugralins cluster does not contain an independent methyltransferase, the PKS FGR1 is probably responsible for adding two methyl groups to the same carbon atom. Fugralin B is similar to fugralin A except for a cyclization between the carboxylic acid C-8 and the alcohol on C-4 resulting in a six membered lactone ring, probably catalyzed by the cyclase FGR4. The exact role of the individual cluster genes remains unknown and further work is needed to unravel the biosynthetic pathway. The sequence is that of Acetyltransferase FGR3 from Gibberella zeae (strain ATCC MYA-4620 / CBS 123657 / FGSC 9075 / NRRL 31084 / PH-1) (Wheat head blight fungus).